A 126-amino-acid polypeptide reads, in one-letter code: Small ribosomal subunit protein uS13 (126 aa).

Positions 95–126 are disordered; it reads GMPVRGQRTRTNARTRRGRRGQAIGIKKKVKK.

This sequence belongs to the universal ribosomal protein uS13 family. In terms of assembly, part of the 30S ribosomal subunit. Forms a loose heterodimer with protein S19. Forms two bridges to the 50S subunit in the 70S ribosome.

Functionally, located at the top of the head of the 30S subunit, it contacts several helices of the 16S rRNA. In the 70S ribosome it contacts the 23S rRNA (bridge B1a) and protein L5 of the 50S subunit (bridge B1b), connecting the 2 subunits; these bridges are implicated in subunit movement. Contacts the tRNAs in the A and P-sites. The protein is Small ribosomal subunit protein uS13 of Chloroflexus aggregans (strain MD-66 / DSM 9485).